The following is a 132-amino-acid chain: Small ribosomal subunit protein uS8 (132 aa).

This sequence belongs to the universal ribosomal protein uS8 family. As to quaternary structure, part of the 30S ribosomal subunit. Contacts proteins S5 and S12.

One of the primary rRNA binding proteins, it binds directly to 16S rRNA central domain where it helps coordinate assembly of the platform of the 30S subunit. The polypeptide is Small ribosomal subunit protein uS8 (Kineococcus radiotolerans (strain ATCC BAA-149 / DSM 14245 / SRS30216)).